The following is a 497-amino-acid chain: Aspartyl/glutamyl-tRNA(Asn/Gln) amidotransferase subunit B (497 aa).

Belongs to the GatB/GatE family. GatB subfamily. In terms of assembly, heterotrimer of A, B and C subunits.

It carries out the reaction L-glutamyl-tRNA(Gln) + L-glutamine + ATP + H2O = L-glutaminyl-tRNA(Gln) + L-glutamate + ADP + phosphate + H(+). The enzyme catalyses L-aspartyl-tRNA(Asn) + L-glutamine + ATP + H2O = L-asparaginyl-tRNA(Asn) + L-glutamate + ADP + phosphate + 2 H(+). Its function is as follows. Allows the formation of correctly charged Asn-tRNA(Asn) or Gln-tRNA(Gln) through the transamidation of misacylated Asp-tRNA(Asn) or Glu-tRNA(Gln) in organisms which lack either or both of asparaginyl-tRNA or glutaminyl-tRNA synthetases. The reaction takes place in the presence of glutamine and ATP through an activated phospho-Asp-tRNA(Asn) or phospho-Glu-tRNA(Gln). The polypeptide is Aspartyl/glutamyl-tRNA(Asn/Gln) amidotransferase subunit B (Nocardioides sp. (strain ATCC BAA-499 / JS614)).